A 112-amino-acid chain; its full sequence is Dolichyl-diphosphooligosaccharide--protein glycosyltransferase subunit DAD1 (112 aa).

Topologically, residues 1–27 are cytoplasmic; sequence MVELSSVISKFYNDYVQNTPKKLKLVD. A helical membrane pass occupies residues 28-48; it reads IYLGYILLTGIIQFVYCCLVG. The Lumenal segment spans residues 49-51; the sequence is TFP. The helical transmembrane segment at 52-72 threads the bilayer; that stretch reads FNSFLSGFISTVSCFVLAVCL. The Cytoplasmic segment spans residues 73-91; the sequence is RLQANPQNKSVFAGISPER. The chain crosses the membrane as a helical span at residues 92–112; sequence GFADFIFAHVILHLVVMNFIG.

It belongs to the DAD/OST2 family. As to quaternary structure, component of the oligosaccharyltransferase (OST) complex.

Its subcellular location is the endoplasmic reticulum membrane. The protein operates within protein modification; protein glycosylation. In terms of biological role, subunit of the oligosaccharyl transferase (OST) complex that catalyzes the initial transfer of a defined glycan (Glc(3)Man(9)GlcNAc(2) in eukaryotes) from the lipid carrier dolichol-pyrophosphate to an asparagine residue within an Asn-X-Ser/Thr consensus motif in nascent polypeptide chains, the first step in protein N-glycosylation. N-glycosylation occurs cotranslationally and the complex associates with the Sec61 complex at the channel-forming translocon complex that mediates protein translocation across the endoplasmic reticulum (ER). All subunits are required for a maximal enzyme activity. Probably as part of the N-glycosylation pathway, plays a role in the regulation of tissue growth and apoptosis. The chain is Dolichyl-diphosphooligosaccharide--protein glycosyltransferase subunit DAD1 from Drosophila melanogaster (Fruit fly).